Here is a 519-residue protein sequence, read N- to C-terminus: Aldehyde dehydrogenase X, mitochondrial (519 aa).

Residues 1 to 19 (MLNARFLVPRLLCLQGRTT) constitute a mitochondrion transit peptide. Position 53 is an N6-acetyllysine (K53). Position 54 is an N6-acetyllysine; alternate (K54). K54 is modified (N6-succinyllysine; alternate). Residue 264 to 269 (GSTEVG) coordinates NAD(+). The Proton acceptor role is filled by E287. The active-site Nucleophile is C321. N6-acetyllysine; alternate is present on residues K366, K385, K401, and K428. K366, K385, K401, and K428 each carry N6-succinyllysine; alternate. At K431 the chain carries N6-acetyllysine.

It belongs to the aldehyde dehydrogenase family. As to quaternary structure, homotetramer.

Its subcellular location is the mitochondrion matrix. The catalysed reaction is an aldehyde + NAD(+) + H2O = a carboxylate + NADH + 2 H(+). It participates in alcohol metabolism; ethanol degradation; acetate from ethanol: step 2/2. ALDHs play a major role in the detoxification of alcohol-derived acetaldehyde. They are involved in the metabolism of corticosteroids, biogenic amines, neurotransmitters, and lipid peroxidation. The sequence is that of Aldehyde dehydrogenase X, mitochondrial (Aldh1b1) from Rattus norvegicus (Rat).